A 145-amino-acid chain; its full sequence is Large ribosomal subunit protein uL13 (145 aa).

The disordered stretch occupies residues 72-91; that stretch reads DKMYHRHSNHPGGLKSISAG.

This sequence belongs to the universal ribosomal protein uL13 family. Part of the 50S ribosomal subunit.

In terms of biological role, this protein is one of the early assembly proteins of the 50S ribosomal subunit, although it is not seen to bind rRNA by itself. It is important during the early stages of 50S assembly. The polypeptide is Large ribosomal subunit protein uL13 (Staphylococcus epidermidis (strain ATCC 12228 / FDA PCI 1200)).